Consider the following 269-residue polypeptide: Formamidopyrimidine-DNA glycosylase (269 aa).

Pro-2 (schiff-base intermediate with DNA) is an active-site residue. The active-site Proton donor is Glu-3. Catalysis depends on Lys-57, which acts as the Proton donor; for beta-elimination activity. 3 residues coordinate DNA: His-90, Arg-109, and Lys-150. The FPG-type zinc finger occupies 235 to 269 (QVYGRKGEPCRVCGTPIVATKHAQRATFYCRQCQK). Catalysis depends on Arg-259, which acts as the Proton donor; for delta-elimination activity.

The protein belongs to the FPG family. In terms of assembly, monomer. It depends on Zn(2+) as a cofactor.

The enzyme catalyses Hydrolysis of DNA containing ring-opened 7-methylguanine residues, releasing 2,6-diamino-4-hydroxy-5-(N-methyl)formamidopyrimidine.. It carries out the reaction 2'-deoxyribonucleotide-(2'-deoxyribose 5'-phosphate)-2'-deoxyribonucleotide-DNA = a 3'-end 2'-deoxyribonucleotide-(2,3-dehydro-2,3-deoxyribose 5'-phosphate)-DNA + a 5'-end 5'-phospho-2'-deoxyribonucleoside-DNA + H(+). Its function is as follows. Involved in base excision repair of DNA damaged by oxidation or by mutagenic agents. Acts as a DNA glycosylase that recognizes and removes damaged bases. Has a preference for oxidized purines, such as 7,8-dihydro-8-oxoguanine (8-oxoG). Has AP (apurinic/apyrimidinic) lyase activity and introduces nicks in the DNA strand. Cleaves the DNA backbone by beta-delta elimination to generate a single-strand break at the site of the removed base with both 3'- and 5'-phosphates. The protein is Formamidopyrimidine-DNA glycosylase of Escherichia coli O6:K15:H31 (strain 536 / UPEC).